Here is a 398-residue protein sequence, read N- to C-terminus: uncharacterized protein (398 aa).

This is an uncharacterized protein from Bacillus subtilis (strain 168).